A 355-amino-acid chain; its full sequence is Fructose-1,6-bisphosphatase (355 aa).

AMP-binding positions include 25-30 (ILDQQH) and 37-41 (TGEFS). Residues Asp-78 and Glu-107 each coordinate Mg(2+). Residue 121 to 122 (KY) participates in AMP binding. Mg(2+) is bound by residues Asp-127, Ile-129, and Asp-130. A substrate-binding site is contributed by 130–133 (DGSS). Position 149 (Lys-149) interacts with AMP. Substrate is bound by residues 230 to 233 (NEGN), 263 to 268 (RYIGSM), Tyr-284, and 294 to 296 (KLR). Residue Glu-300 participates in Mg(2+) binding.

Belongs to the FBPase class 1 family. As to quaternary structure, homotetramer. It depends on Mg(2+) as a cofactor.

It carries out the reaction beta-D-fructose 1,6-bisphosphate + H2O = beta-D-fructose 6-phosphate + phosphate. Its pathway is carbohydrate biosynthesis; gluconeogenesis. With respect to regulation, subject to complex allosteric regulation. The enzyme can assume an active R-state, or an inactive T-state. Intermediate conformations may exist. AMP acts as allosteric inhibitor. AMP binding affects the turnover of bound substrate and not the affinity for substrate. The polypeptide is Fructose-1,6-bisphosphatase (FBP1) (Kluyveromyces lactis (strain ATCC 8585 / CBS 2359 / DSM 70799 / NBRC 1267 / NRRL Y-1140 / WM37) (Yeast)).